Reading from the N-terminus, the 456-residue chain is UDP-N-acetylmuramate--L-alanine ligase (456 aa).

118 to 124 (GTHGKST) serves as a coordination point for ATP.

Belongs to the MurCDEF family.

Its subcellular location is the cytoplasm. It catalyses the reaction UDP-N-acetyl-alpha-D-muramate + L-alanine + ATP = UDP-N-acetyl-alpha-D-muramoyl-L-alanine + ADP + phosphate + H(+). It functions in the pathway cell wall biogenesis; peptidoglycan biosynthesis. Cell wall formation. This chain is UDP-N-acetylmuramate--L-alanine ligase, found in Paenarthrobacter aurescens (strain TC1).